A 688-amino-acid polypeptide reads, in one-letter code: Elongation factor G (688 aa).

The tr-type G domain maps to 8–282 (KNFRNFGIMA…AVVDFLPSPV (275 aa)). GTP contacts are provided by residues 17-24 (AHIDAGKT), 81-85 (DTPGH), and 135-138 (NKMD).

Belongs to the TRAFAC class translation factor GTPase superfamily. Classic translation factor GTPase family. EF-G/EF-2 subfamily.

It localises to the cytoplasm. Functionally, catalyzes the GTP-dependent ribosomal translocation step during translation elongation. During this step, the ribosome changes from the pre-translocational (PRE) to the post-translocational (POST) state as the newly formed A-site-bound peptidyl-tRNA and P-site-bound deacylated tRNA move to the P and E sites, respectively. Catalyzes the coordinated movement of the two tRNA molecules, the mRNA and conformational changes in the ribosome. The protein is Elongation factor G (fusA) of Mycoplasma genitalium (strain ATCC 33530 / DSM 19775 / NCTC 10195 / G37) (Mycoplasmoides genitalium).